Here is a 294-residue protein sequence, read N- to C-terminus: IVFRAAQTRSDIEIVAINDLLDAEYMAYMLKYDSTHGRFDGTVEVKDGHLVVNGKKIRVTAEKDPANLKWNEVGVDVVAEATGIFLTDETARKHITAGAKKVVLTGPSKDDTPMFVKGANFDKYNGQDIVSNASCTTNCLAPLAKVINDNFGIIEGLMTTVHATTATQKTVDGPSHKDWRGGRGAAQNIIPSSTGAAKAVGKVLPELNGKLTGMAFRVPTPNVSVVDLTVRLEKAASYEDIKKAIKAAAEGEMKGVLGYTEDDVVSTDFNGEVCTSVFDAKAGIALNDNFVKLV.

Residues aspartate 19, lysine 63, and threonine 105 each contribute to the NAD(+) site. Residues 134-136, threonine 165, 194-195, and arginine 217 each bind D-glyceraldehyde 3-phosphate; these read SCT and TG. Cysteine 135 (nucleophile) is an active-site residue.

The protein belongs to the glyceraldehyde-3-phosphate dehydrogenase family. Homotetramer.

Its subcellular location is the cytoplasm. It carries out the reaction D-glyceraldehyde 3-phosphate + phosphate + NAD(+) = (2R)-3-phospho-glyceroyl phosphate + NADH + H(+). It participates in carbohydrate degradation; glycolysis; pyruvate from D-glyceraldehyde 3-phosphate: step 1/5. Functionally, catalyzes the oxidative phosphorylation of glyceraldehyde 3-phosphate (G3P) to 1,3-bisphosphoglycerate (BPG) using the cofactor NAD. The first reaction step involves the formation of a hemiacetal intermediate between G3P and a cysteine residue, and this hemiacetal intermediate is then oxidized to a thioester, with concomitant reduction of NAD to NADH. The reduced NADH is then exchanged with the second NAD, and the thioester is attacked by a nucleophilic inorganic phosphate to produce BPG. This chain is Glyceraldehyde-3-phosphate dehydrogenase (gap), found in Atlantibacter hermannii (Escherichia hermannii).